Here is a 106-residue protein sequence, read N- to C-terminus: Small ribosomal subunit protein bS20 (106 aa).

Over residues 1–32 (MAQKKPKRNLSALKRHRQSLKRRLRNKAKKSA) the composition is skewed to basic residues. Residues 1-33 (MAQKKPKRNLSALKRHRQSLKRRLRNKAKKSAI) are disordered.

Belongs to the bacterial ribosomal protein bS20 family.

Binds directly to 16S ribosomal RNA. This is Small ribosomal subunit protein bS20 (rpsT) from Thermus thermophilus (strain ATCC BAA-163 / DSM 7039 / HB27).